Consider the following 115-residue polypeptide: Ig heavy chain V region PJ14 (115 aa).

Positions 1 to 19 (MAVLALLFCLVTFPSCILS) are cleaved as a signal peptide. In terms of domain architecture, Ig-like spans 20 to 115 (QVQLKESGPG…TDDTARYYCA (96 aa)).

The chain is Ig heavy chain V region PJ14 from Mus musculus (Mouse).